The chain runs to 217 residues: Large ribosomal subunit protein bL25 (217 aa).

Residues 178–217 (VVAPTEEPTEEEIEAMEGEQQTEEPEVVGESKEDEEKTEE) are disordered. The segment covering 184-205 (EPTEEEIEAMEGEQQTEEPEVV) has biased composition (acidic residues). A compositionally biased stretch (basic and acidic residues) spans 206 to 217 (GESKEDEEKTEE).

This sequence belongs to the bacterial ribosomal protein bL25 family. CTC subfamily. As to quaternary structure, part of the 50S ribosomal subunit; part of the 5S rRNA/L5/L18/L25 subcomplex. Contacts the 5S rRNA. Binds to the 5S rRNA independently of L5 and L18.

Its function is as follows. This is one of the proteins that binds to the 5S RNA in the ribosome where it forms part of the central protuberance. The polypeptide is Large ribosomal subunit protein bL25 (Staphylococcus aureus (strain MRSA252)).